A 67-amino-acid chain; its full sequence is Conotoxin Pu5.1 (67 aa).

Positions 1–22 (MRCVPVFVILLLLIASTPSVDA) are cleaved as a signal peptide. A propeptide spanning residues 23–51 (RPNPKDDVPLASFHEDANGILQMLWKKGR) is cleaved from the precursor. The residue at position 63 (tryptophan 63) is a Tryptophan amide.

It belongs to the conotoxin T superfamily. In terms of processing, contains 2 disulfide bonds that can be either 'C1-C3, C2-C4' or 'C1-C4, C2-C3', since these disulfide connectivities have been observed for conotoxins with cysteine framework V (for examples, see AC P0DQQ7 and AC P81755). Expressed by the venom duct.

It localises to the secreted. The protein is Conotoxin Pu5.1 of Conus pulicarius (Flea-bitten cone).